The following is a 719-amino-acid chain: Histone-lysine N-methyltransferase SETDB2 (719 aa).

The span at 72–82 shows a compositional bias: polar residues; that stretch reads SQKEVNAQSSD. A disordered region spans residues 72-102; sequence SQKEVNAQSSDPMPVTQKEQENKSNAFPSTS. Positions 157-229 constitute an MBD domain; sequence LNLKGENPLQ…DNFSFNTYVQ (73 aa). A Pre-SET domain is found at 291-364; that stretch reads DSCDCSEGCI…LCQNRVVQHG (74 aa). The Zn(2+) site is built by Cys-293, Cys-295, Cys-299, Cys-305, Cys-307, Cys-345, Cys-349, Cys-351, and Cys-356. Residues 367–694 enclose the SET domain; the sequence is VRLQVFKTEQ…ARTELTWDYG (328 aa). S-adenosyl-L-methionine is bound by residues 377–379 and Asp-418; that span reads KGW. A disordered region spans residues 508–547; the sequence is FVSSESVTPEDNDGFKPPREHLNSKTKGAQKDSSSNHVDE. A compositionally biased stretch (basic and acidic residues) spans 520 to 530; that stretch reads DGFKPPREHLN. The segment covering 532–543 has biased composition (polar residues); it reads KTKGAQKDSSSN. Residues Arg-648 and 651-652 contribute to the S-adenosyl-L-methionine site; that span reads NH. Zn(2+) is bound by residues Cys-654, Cys-707, Cys-709, and Cys-714.

This sequence belongs to the class V-like SAM-binding methyltransferase superfamily. Ubiquitous. Highest expression in heart, testis and ovary.

It localises to the nucleus. Its subcellular location is the chromosome. It carries out the reaction N(6),N(6)-dimethyl-L-lysyl(9)-[histone H3] + S-adenosyl-L-methionine = N(6),N(6),N(6)-trimethyl-L-lysyl(9)-[histone H3] + S-adenosyl-L-homocysteine + H(+). Histone methyltransferase involved in left-right axis specification in early development and mitosis. Specifically trimethylates 'Lys-9' of histone H3 (H3K9me3). H3K9me3 is a specific tag for epigenetic transcriptional repression that recruits HP1 (CBX1, CBX3 and/or CBX5) proteins to methylated histones. Contributes to H3K9me3 in both the interspersed repetitive elements and centromere-associated repeats. Plays a role in chromosome condensation and segregation during mitosis. The chain is Histone-lysine N-methyltransferase SETDB2 (SETDB2) from Homo sapiens (Human).